The primary structure comprises 466 residues: Dynein axonemal assembly factor 11 (466 aa).

4 LRR repeats span residues 22–43 (SLEE…DKWC), 45–66 (DLKI…SKLK), 67–88 (KLEY…EGCE), and 89–110 (ELAK…KNLQ). Positions 123 to 161 (NPCASFDHYREFVVATLPQLKWLDGKEIEPSERIKALQD) constitute an LRRCT domain. A coiled-coil region spans residues 178–204 (LKRAKLKEEAQRKHQEEDKNEDKRSNA). Residues 185–202 (EEAQRKHQEEDKNEDKRS) are compositionally biased toward basic and acidic residues. Disordered stretches follow at residues 185–206 (EEAQ…NAGF), 268–288 (MEKQ…VKPP), and 391–466 (AFKS…PPLI). Residues 269–287 (EKQRKKQEKLSEKKKKVKP) are compositionally biased toward basic residues. The CS domain maps to 301–396 (VNEPKIDFSL…GGQRAFKSMK (96 aa)). Basic and acidic residues-rich tracts occupy residues 398-425 (TSDR…KHSF) and 433-445 (QEKK…RPEP). A compositionally biased stretch (acidic residues) spans 450-460 (SEEDPTFEDNP).

Belongs to the tilB family. Interacts (via CS domain) with ZMYND10 (via C-terminus). As to expression, expressed predominantly in testis and in nasal epithelial cells.

The protein resides in the cytoplasm. It is found in the cell projection. The protein localises to the cilium. It localises to the dynein axonemal particle. Its subcellular location is the flagellum. Its function is as follows. Involved in dynein arm assembly, is important for expression and transporting outer dynein arm (ODA) proteins from the cytoplasm to the cilia. Acts as a crucial component in the formation and motility of spermatozoal flagella. This chain is Dynein axonemal assembly factor 11, found in Homo sapiens (Human).